The following is a 95-amino-acid chain: Lipolysis-activating peptide 1-beta chain (95 aa).

The first 22 residues, 1 to 22 (MISVQVIFIAFISIIAFSMVCG), serve as a signal peptide directing secretion. The region spanning 23-91 (GNVFPNRELG…FLNALEKQCP (69 aa)) is the LCN-type CS-alpha/beta domain. Disulfide bonds link Cys37–Cys60, Cys45–Cys70, and Cys49–Cys72.

Homodimer; disulfide-linked or monomer (edited version) or heterodimer of an alpha chain (AC P84810) and this beta chain (non-edited version). Expressed by the venom gland.

The protein localises to the secreted. Its function is as follows. The homodimer inhibits HMG-CoA reductase (HMGCR) (32% of inhibition produced by 0.6 uM), a glycoprotein involved in the control of cholesterol biosynthesis. The inhibitory effects of bumarsin are seen at much lower concentrations (0.6 uM) than that for statins such as atorvastatin (5 mM) and simvastatin (10 uM). In addition to inhibition of HMG-CoA reductase, this protein lowers cholesterol levels by inducing steroid hormone synthesis via StAR, and by increasing reverse cholesterol transport mediated by the induction of ABCA1 and APOA1. In terms of biological role, the heterodimer non-edited LVP1 induces lipolysis in rat adipocytes. Induction of lipolysis by LVP1 appears to be mediated through the beta-2 adrenergic receptor pathway (ADRB2). Intracerebroventricular injection is not toxic to mice. The monomer edited version, similar to alpha-toxins, may modulate voltage-gated sodium channels (Nav) and may block voltage-gated potassium channels (Kv). The chain is Lipolysis-activating peptide 1-beta chain from Buthus occitanus tunetanus (Common European scorpion).